The sequence spans 114 residues: Thioredoxin H1 (114 aa).

A2 is subject to N-acetylalanine. The Thioredoxin domain occupies 2 to 114; the sequence is ASEEGQVIAC…LQSTIAKHLA (113 aa). Residues C40 and C43 each act as nucleophile in the active site. Residues C40 and C43 are joined by a disulfide bond.

It belongs to the thioredoxin family. Plant H-type subfamily. As to quaternary structure, interacts with FBA6. Interacts with MDH1.

It is found in the cytoplasm. Thiol-disulfide oxidoreductase involved in the redox regulation of a number of cytosolic enzymes. Activates the cytosolic malate dehydrogenase (MDH) probably by reducing an interchain disulfide bond of the inactive MDH homodimer. Possesses insulin disulfide bonds reducing activity. This chain is Thioredoxin H1 (TRX1), found in Arabidopsis thaliana (Mouse-ear cress).